A 168-amino-acid polypeptide reads, in one-letter code: Probable chorismate pyruvate-lyase (168 aa).

Positions 75, 114, and 155 each coordinate substrate.

It belongs to the UbiC family.

It localises to the cytoplasm. It catalyses the reaction chorismate = 4-hydroxybenzoate + pyruvate. Its pathway is cofactor biosynthesis; ubiquinone biosynthesis. In terms of biological role, removes the pyruvyl group from chorismate, with concomitant aromatization of the ring, to provide 4-hydroxybenzoate (4HB) for the ubiquinone pathway. In Psychrobacter cryohalolentis (strain ATCC BAA-1226 / DSM 17306 / VKM B-2378 / K5), this protein is Probable chorismate pyruvate-lyase.